Here is a 116-residue protein sequence, read N- to C-terminus: Large ribosomal subunit protein bL19 (116 aa).

It belongs to the bacterial ribosomal protein bL19 family.

This protein is located at the 30S-50S ribosomal subunit interface and may play a role in the structure and function of the aminoacyl-tRNA binding site. This is Large ribosomal subunit protein bL19 from Clostridioides difficile (strain 630) (Peptoclostridium difficile).